Consider the following 402-residue polypeptide: Acetate kinase (402 aa).

Asn-7 lines the Mg(2+) pocket. ATP is bound at residue Lys-14. Arg-95 contacts substrate. Catalysis depends on Asp-152, which acts as the Proton donor/acceptor. ATP-binding positions include 212-216 (HLGNG), 286-288 (DMR), and 334-338 (GIGEN). Position 388 (Glu-388) interacts with Mg(2+).

This sequence belongs to the acetokinase family. As to quaternary structure, homodimer. Mg(2+) is required as a cofactor. Mn(2+) serves as cofactor.

It localises to the cytoplasm. It carries out the reaction acetate + ATP = acetyl phosphate + ADP. Its pathway is metabolic intermediate biosynthesis; acetyl-CoA biosynthesis; acetyl-CoA from acetate: step 1/2. Its function is as follows. Catalyzes the formation of acetyl phosphate from acetate and ATP. Can also catalyze the reverse reaction. In Oleidesulfovibrio alaskensis (strain ATCC BAA-1058 / DSM 17464 / G20) (Desulfovibrio alaskensis), this protein is Acetate kinase.